The chain runs to 365 residues: Spermidine/putrescine import ATP-binding protein PotA (365 aa).

In terms of domain architecture, ABC transporter spans 7–237 (LTLADITKRF…PNNLFVASFI (231 aa)). 39–46 (GPSGCGKT) contacts ATP.

Belongs to the ABC transporter superfamily. Spermidine/putrescine importer (TC 3.A.1.11.1) family. As to quaternary structure, the complex is composed of two ATP-binding proteins (PotA), two transmembrane proteins (PotB and PotC) and a solute-binding protein (PotD).

The protein resides in the cell inner membrane. It carries out the reaction ATP + H2O + polyamine-[polyamine-binding protein]Side 1 = ADP + phosphate + polyamineSide 2 + [polyamine-binding protein]Side 1.. Part of the ABC transporter complex PotABCD involved in spermidine/putrescine import. Responsible for energy coupling to the transport system. The protein is Spermidine/putrescine import ATP-binding protein PotA of Hahella chejuensis (strain KCTC 2396).